Reading from the N-terminus, the 152-residue chain is Protein-export protein SecB (152 aa).

It belongs to the SecB family. As to quaternary structure, homotetramer, a dimer of dimers. One homotetramer interacts with 1 SecA dimer.

The protein localises to the cytoplasm. Its function is as follows. One of the proteins required for the normal export of preproteins out of the cell cytoplasm. It is a molecular chaperone that binds to a subset of precursor proteins, maintaining them in a translocation-competent state. It also specifically binds to its receptor SecA. The sequence is that of Protein-export protein SecB from Thiobacillus denitrificans (strain ATCC 25259 / T1).